Consider the following 283-residue polypeptide: 4-diphosphocytidyl-2-C-methyl-D-erythritol kinase (283 aa).

Residue Lys-10 is part of the active site. Residue 99–109 (PMGGGLGGGSS) participates in ATP binding. Asp-141 is an active-site residue.

This sequence belongs to the GHMP kinase family. IspE subfamily. Homodimer.

The catalysed reaction is 4-CDP-2-C-methyl-D-erythritol + ATP = 4-CDP-2-C-methyl-D-erythritol 2-phosphate + ADP + H(+). The protein operates within isoprenoid biosynthesis; isopentenyl diphosphate biosynthesis via DXP pathway; isopentenyl diphosphate from 1-deoxy-D-xylulose 5-phosphate: step 3/6. In terms of biological role, catalyzes the phosphorylation of the position 2 hydroxy group of 4-diphosphocytidyl-2C-methyl-D-erythritol. The protein is 4-diphosphocytidyl-2-C-methyl-D-erythritol kinase of Escherichia coli O157:H7 (strain EC4115 / EHEC).